The sequence spans 759 residues: MSERMTPRLFPVSLLIGLLAGCATTPPPDVRRDARLDPQVGAAGATQTTAEQRADGNASAKPTPVIRRGSGTMINQSAAAAPSPTLGMASSGSATFNFEGESVQAVVKAILGDMLGQNYVIAPGVQGTVTLATPNPVSPAQALNLLEMVLGWNNARMVFSGGRYNIVPADQALAGTVAPSTASPSAARGFEVRVVPLKYISASEMKKVLEPYARPNAIVGTDASRNVITLGGTRAELENYLRTVQIFDVDWLSGMSVGVFPIQSGKAEKISADLEKVFGEQSKTPSAGMFRFMPLENANAVLVITPQPRYLDQIQQWLDRIDSAGGGVRLFSYELKYIKAKDLADRLSEVFGGRGNGGNSGPSLVPGGVVNMLGNNSGGADRDESLGSSSGATGGDIGGTSNGSSQSGTSGSFGGSSGSGMLQLPPSTNQNGSVTLEVEGDKVGVSAVAETNTLLVRTSAQAWKSIRDVIEKLDVMPMQVHIEAQIAEVTLTGRLQYGVNWYFENAVTTPSNADGSGGPNLPSAAGRGIWGDVSGSVTSNGVAWTFLGKNAAAIISALDQVTNLRLLQTPSVFVRNNAEATLNVGSRIPINSTSINTGLGSDSSFSSVQYIDTGVILKVRPRVTKDGMVFLDIVQEVSTPGARPAACTAAATTTVNSAACNVDINTRRVKTEAAVQNGDTIMLAGLIDDSTTDGSNGIPFLSKLPVVGALFGRKTQNSDRREVIVLITPSIVRNPQDARDLTDEYGSKFKSMRPMDVHK.

Residues 1-21 form the signal peptide; that stretch reads MSERMTPRLFPVSLLIGLLAG. Cys-22 carries N-palmitoyl cysteine lipidation. Residue Cys-22 is the site of S-diacylglycerol cysteine attachment. Residues 40–51 show a composition bias toward low complexity; the sequence is VGAAGATQTTAE. A disordered region spans residues 40 to 69; the sequence is VGAAGATQTTAEQRADGNASAKPTPVIRRG. The segment at 92–187 is N0; sequence GSATFNFEGE…APSTASPSAA (96 aa). The N1 stretch occupies residues 189-253; the sequence is GFEVRVVPLK…VQIFDVDWLS (65 aa). The N2 stretch occupies residues 254–323; sequence GMSVGVFPIQ…IQQWLDRIDS (70 aa). The segment at 326 to 474 is N3; the sequence is GGVRLFSYEL…SIRDVIEKLD (149 aa). Residues 352-434 are disordered; that stretch reads GGRGNGGNSG…PPSTNQNGSV (83 aa). Positions 392–401 are enriched in gly residues; that stretch reads ATGGDIGGTS. Residues 425-434 show a composition bias toward polar residues; sequence PPSTNQNGSV. The interval 479 to 734 is secretin; sequence QVHIEAQIAE…VLITPSIVRN (256 aa). The interval 736 to 759 is s domain; sequence QDARDLTDEYGSKFKSMRPMDVHK.

The protein belongs to the bacterial secretin family. GSP D subfamily. Forms a cylindrical channel with 15 subunits. Binds to XpsN.

The protein localises to the cell outer membrane. Involved in a type II secretion system (T2SS, formerly general secretion pathway, GSP) for the export of proteins. This subunit forms the outer membrane channel. In Xanthomonas campestris pv. campestris (strain ATCC 33913 / DSM 3586 / NCPPB 528 / LMG 568 / P 25), this protein is Secretin XpsD (xpsD).